We begin with the raw amino-acid sequence, 387 residues long: Patatin-12 (387 aa).

A signal peptide spans 1 to 23 (MATTKSFLILIVMILATTSSTFA). The PNPLA domain occupies 32 to 230 (LSIDGGGIKG…TVGDPALLSL (199 aa)). Positions 36-41 (GGGIKG) match the GXGXXG motif. Residues 75 to 79 (GTSTG) carry the GXSXG motif. S77 (nucleophile) is an active-site residue. N115 is a glycosylation site (N-linked (GlcNAc...) asparagine). D216 functions as the Proton acceptor in the catalytic mechanism. The DGA/G signature appears at 216–218 (DGG). A coiled-coil region spans residues 322–385 (ENALTGTTTE…DRKKLRANKA (64 aa)).

It belongs to the patatin family. Tuber.

Its subcellular location is the vacuole. Functionally, probable lipolytic acyl hydrolase (LAH), an activity which is thought to be involved in the response of tubers to pathogens. This Solanum tuberosum (Potato) protein is Patatin-12.